The primary structure comprises 116 residues: Aspartate 1-decarboxylase (116 aa).

Catalysis depends on S25, which acts as the Schiff-base intermediate with substrate; via pyruvic acid. Pyruvic acid (Ser) is present on S25. T57 provides a ligand contact to substrate. Y58 functions as the Proton donor in the catalytic mechanism. 73 to 75 (GAA) is a binding site for substrate.

Belongs to the PanD family. As to quaternary structure, heterooctamer of four alpha and four beta subunits. It depends on pyruvate as a cofactor. Post-translationally, is synthesized initially as an inactive proenzyme, which is activated by self-cleavage at a specific serine bond to produce a beta-subunit with a hydroxyl group at its C-terminus and an alpha-subunit with a pyruvoyl group at its N-terminus.

The protein localises to the cytoplasm. It carries out the reaction L-aspartate + H(+) = beta-alanine + CO2. It participates in cofactor biosynthesis; (R)-pantothenate biosynthesis; beta-alanine from L-aspartate: step 1/1. Its function is as follows. Catalyzes the pyruvoyl-dependent decarboxylation of aspartate to produce beta-alanine. This is Aspartate 1-decarboxylase from Syntrophus aciditrophicus (strain SB).